The chain runs to 186 residues: Heat shock protein 23 (186 aa).

The sHSP domain occupies 53 to 161 (VGASSGSSGA…KGNERIVQIQ (109 aa)). Residues 163–186 (VGPAHLNVKENPKEAVEQDNGNDK) form a disordered region. Over residues 169–186 (NVKENPKEAVEQDNGNDK) the composition is skewed to basic and acidic residues.

Belongs to the small heat shock protein (HSP20) family.

The sequence is that of Heat shock protein 23 (Hsp23) from Drosophila melanogaster (Fruit fly).